A 292-amino-acid polypeptide reads, in one-letter code: 4-hydroxybenzoate solanesyltransferase (292 aa).

The next 9 helical transmembrane spans lie at 28-48 (LILMIPALWAVCLAAQGLPPL), 49-69 (PLLGTIALGTLATSGLGCVVN), 97-117 (VGIGVALVALLCAAGLAFYLT), 118-138 (PLSFWLCVAAVPVIVAYPGAK), 140-160 (VFPVPQLVLSIAWGFAVLISW), 172-192 (WVLWGATVFWTLGFDTVYAMA), 217-237 (VGIFFALTIGCLFYLGMILML), 239-259 (PLYWLSLAIAIVGWVIQYIQL), and 272-292 (IFGQNVIIGFVLLAGMLLGWL).

Belongs to the UbiA prenyltransferase family. Mg(2+) is required as a cofactor.

The protein resides in the cell inner membrane. The enzyme catalyses all-trans-nonaprenyl diphosphate + 4-hydroxybenzoate = 4-hydroxy-3-(all-trans-nonaprenyl)benzoate + diphosphate. Catalyzes the prenylation of para-hydroxybenzoate (PHB) with an all-trans polyprenyl group. Mediates the second step in the final reaction sequence of plastoquinone-9 (PQ-9) biosynthesis, which is the condensation of the polyisoprenoid side chain with PHB, generating the first membrane-bound Q intermediate 4-hydroxy-3-solanesylbenzoate. The sequence is that of 4-hydroxybenzoate solanesyltransferase from Synechocystis sp. (strain ATCC 27184 / PCC 6803 / Kazusa).